Consider the following 170-residue polypeptide: Opacity-related protein POPM3 (170 aa).

It belongs to the opacity porin family.

The protein localises to the cell outer membrane. This chain is Opacity-related protein POPM3 (opr), found in Neisseria meningitidis serogroup C.